Here is a 341-residue protein sequence, read N- to C-terminus: Retinol dehydrogenase 10 (341 aa).

Residues 3-23 (IVVEFFLVTFKVLWAFVLAAA) traverse the membrane as a helical; Signal-anchor segment. 40-64 (LITGAGSGLGRLFALEFARRRALLV) is a binding site for NADP(+). A substrate-binding site is contributed by serine 197. The active-site Proton acceptor is the tyrosine 210.

Belongs to the short-chain dehydrogenases/reductases (SDR) family. In terms of tissue distribution, detected in retina, entire eyecups and in liver (at protein level).

It is found in the microsome membrane. Its subcellular location is the endoplasmic reticulum membrane. The catalysed reaction is all-trans-retinol + NADP(+) = all-trans-retinal + NADPH + H(+). It participates in cofactor metabolism; retinol metabolism. Functionally, retinol dehydrogenase with a clear preference for NADP. Converts all-trans-retinol to all-trans-retinal. The chain is Retinol dehydrogenase 10 (Rdh10) from Rattus norvegicus (Rat).